Reading from the N-terminus, the 223-residue chain is Deoxyribose-phosphate aldolase (223 aa).

Residue aspartate 89 is the Proton donor/acceptor of the active site. Lysine 152 acts as the Schiff-base intermediate with acetaldehyde in catalysis. Catalysis depends on lysine 181, which acts as the Proton donor/acceptor.

This sequence belongs to the DeoC/FbaB aldolase family. DeoC type 1 subfamily.

The protein localises to the cytoplasm. It catalyses the reaction 2-deoxy-D-ribose 5-phosphate = D-glyceraldehyde 3-phosphate + acetaldehyde. It functions in the pathway carbohydrate degradation; 2-deoxy-D-ribose 1-phosphate degradation; D-glyceraldehyde 3-phosphate and acetaldehyde from 2-deoxy-alpha-D-ribose 1-phosphate: step 2/2. Its function is as follows. Catalyzes a reversible aldol reaction between acetaldehyde and D-glyceraldehyde 3-phosphate to generate 2-deoxy-D-ribose 5-phosphate. The chain is Deoxyribose-phosphate aldolase from Bacillus cereus (strain ATCC 10987 / NRS 248).